Consider the following 371-residue polypeptide: MVTPVSISNYISLPDDFPVRNIAPQVKEVLKDFIDALSTIICNEEWRTSLNINSATKKIFNNLDNLSYIQRTSFRGNDTLYNEKVQFKLTYPARNGRHKENIEFQVVINLSPIYLDNFRHDGEINIFCAPNPKPVTMGRVFQTGVERVLFLFLNDFIEQFPMINPGVPIKRAHTPHIEPLPSDHHTAADYLRQFDLLVLNFISRGNFVILPRLWNNSEVHRWFVNKDPNLITAILDITDSELKEDLLQSLMDSLGSNKHVLPEVCICFLSLLAEQESPHFQNLFLFFANMLLHYHQFMNPNESDLNDVLMPASLSDDKIIKHMARRTLKLFVKNETPPKVTHEDLVKNRPRSPVRPPIPATAKTPDLPERH.

A disordered region spans residues 339-371 (KVTHEDLVKNRPRSPVRPPIPATAKTPDLPERH).

This is an uncharacterized protein from Escherichia coli (strain K12).